A 436-amino-acid chain; its full sequence is Protein GOLM2 (436 aa).

Met-1 is modified (N-acetylmethionine). Residues Met-1 to Pro-14 lie on the Cytoplasmic side of the membrane. A helical; Signal-anchor for type II membrane protein membrane pass occupies residues Ser-15–Ile-35. Positions Ile-35 to Ile-198 form a coiled coil. At Ser-36 to Leu-436 the chain is on the lumenal side. The span at Ala-225–Gly-247 shows a compositional bias: basic and acidic residues. The segment at Ala-225–Leu-436 is disordered. 2 positions are modified to phosphoserine: Ser-233 and Ser-275. The segment covering Asn-305–Leu-321 has biased composition (polar residues). Phosphoserine occurs at positions 328 and 332. The segment covering Ala-344–Asp-362 has biased composition (basic and acidic residues). Ser-366 is modified (phosphoserine). Over residues Tyr-399 to Arg-418 the composition is skewed to acidic residues. Residues Asp-426–Leu-436 are compositionally biased toward basic and acidic residues.

Belongs to the GOLM family.

It localises to the membrane. In Homo sapiens (Human), this protein is Protein GOLM2.